Consider the following 953-residue polypeptide: Coatomer subunit beta (953 aa).

T2 carries the N-acetylthreonine modification. HEAT repeat units lie at residues H96–E131, L132–H168, S240–T276, A277–H314, R316–V353, and D396–N433. At K494 the chain carries N6-acetyllysine.

Oligomeric complex that consists of at least the alpha, beta, beta', gamma, delta, epsilon and zeta subunits. Interacts with CAPN8. Interacts with SCYL1 and PRKCE. Interacts with COPG1. Interacts with ARF1 (myristoylated); this interaction is required for binding of COPB1 to Golgi membranes. Interacts (via trunk domain) with ARF1 (via switch I region); the interaction is direct. Interacts with KCNK2 (via N-terminus); this interaction increases the channel-mediated whole cell currents and promotes plasma membrane expression of KCNK2. Interacts with STX17. Interacts with TMEM115. Interacts with TMEM41B. Post-translationally, proteolytically cleaved between Ser-528 and Ser-529 by CAPN8. Predominantly expressed in the upper one-third of the oxyntic mucosa and in most regions of the pyloric mucosa. Ubiquitously expressed including platelet, liver, heart, spleen, lung and kidney.

Its subcellular location is the cytoplasm. It is found in the golgi apparatus membrane. It localises to the cytoplasmic vesicle. The protein resides in the COPI-coated vesicle membrane. The protein localises to the cell membrane. Its subcellular location is the endoplasmic reticulum-Golgi intermediate compartment. In terms of biological role, the coatomer is a cytosolic protein complex that binds to dilysine motifs and reversibly associates with Golgi non-clathrin-coated vesicles, which further mediate biosynthetic protein transport from the ER, via the Golgi up to the trans Golgi network. Coatomer complex is required for budding from Golgi membranes, and is essential for the retrograde Golgi-to-ER transport of dilysine-tagged proteins. In mammals, the coatomer can only be recruited by membranes associated to ADP-ribosylation factors (ARFs), which are small GTP-binding proteins; the complex also influences the Golgi structural integrity, as well as the processing, activity, and endocytic recycling of LDL receptors. Involved in the Golgi disassembly and reassembly processes during cell cycle. Involved in autophagy by playing a role in early endosome function. Plays a role in organellar compartmentalization of secretory compartments including endoplasmic reticulum (ER)-Golgi intermediate compartment (ERGIC), Golgi, trans-Golgi network (TGN) and recycling endosomes, and in biosynthetic transport of CAV1. Plays a functional role in facilitating the transport of kappa-type opioid receptor mRNAs into axons and enhances translation of these proteins in cortical neurons. Required for limiting lipid storage in lipid droplets. Involved in lipid homeostasis by regulating the presence of perilipin family members PLIN2 and PLIN3 at the lipid droplet surface and promoting the association of adipocyte triglyceride lipase (PNPLA2) with the lipid droplet surface to mediate lipolysis. This is Coatomer subunit beta (Copb1) from Mus musculus (Mouse).